The primary structure comprises 187 residues: uncharacterized protein (187 aa).

One can recognise a Nudix hydrolase domain in the interval 26 to 157; sequence NRHAAVLLPI…YLDVSRRGQQ (132 aa). The Nudix box motif lies at 64 to 86; sequence GVADPKDKSIIATALREAEEEVN. Residues glutamate 80 and glutamate 84 each coordinate Mg(2+).

It belongs to the Nudix hydrolase family. PCD1 subfamily. It depends on Mn(2+) as a cofactor. The cofactor is Mg(2+).

In terms of biological role, probably mediates the hydrolysis of some nucleoside diphosphate derivatives. This is an uncharacterized protein from Photorhabdus laumondii subsp. laumondii (strain DSM 15139 / CIP 105565 / TT01) (Photorhabdus luminescens subsp. laumondii).